Consider the following 396-residue polypeptide: Ribosomal RNA large subunit methyltransferase I (396 aa).

The 80-residue stretch at 2-81 folds into the PUA domain; it reads SVRLVLAKGR…ESIDIAFFSR (80 aa).

Belongs to the methyltransferase superfamily. RlmI family.

The protein resides in the cytoplasm. It carries out the reaction cytidine(1962) in 23S rRNA + S-adenosyl-L-methionine = 5-methylcytidine(1962) in 23S rRNA + S-adenosyl-L-homocysteine + H(+). In terms of biological role, specifically methylates the cytosine at position 1962 (m5C1962) of 23S rRNA. This chain is Ribosomal RNA large subunit methyltransferase I, found in Shigella boydii serotype 4 (strain Sb227).